A 145-amino-acid polypeptide reads, in one-letter code: UPF0179 protein Msm_0285 (145 aa).

Belongs to the UPF0179 family.

The protein is UPF0179 protein Msm_0285 of Methanobrevibacter smithii (strain ATCC 35061 / DSM 861 / OCM 144 / PS).